Here is a 92-residue protein sequence, read N- to C-terminus: Small ribosomal subunit protein uS19 (92 aa).

It belongs to the universal ribosomal protein uS19 family.

Its function is as follows. Protein S19 forms a complex with S13 that binds strongly to the 16S ribosomal RNA. This is Small ribosomal subunit protein uS19 (rpsS) from Synechocystis sp. (strain ATCC 27184 / PCC 6803 / Kazusa).